A 440-amino-acid polypeptide reads, in one-letter code: Syntrophin-1 (440 aa).

PH domains lie at 2 to 208 (AAVR…ACTT) and 227 to 340 (QVRH…IGGY). Residues 45–128 (TVRVVKYDGN…VVDLQVQYRR (84 aa)) enclose the PDZ domain. In terms of domain architecture, SU spans 384–440 (SFETIRATGDDGGRFLWVDFGPPHGEQELDLLNSAKPVVFILHSFLATKVYRLGLYA).

It belongs to the syntrophin family. As to quaternary structure, component of the dystrophin glycoprotein complex (DGC). Interacts with dyb-1, dys-1 and snf-6 to form the DGC. Expressed in neurons and muscles; particularly strong expression in the body wall, head and vulval muscles, and in ventral nerve cord (at protein level).

The protein resides in the membrane. The protein localises to the cytoplasm. It is found in the cytoskeleton. Its function is as follows. Adapter protein that binds to and probably organizes the subcellular localization of a variety of membrane proteins. May link various receptors to the actin cytoskeleton and the dystrophin glycoprotein complex (DGC). May also act by slowing calcium channel activity via a direct or indirect mechanism potentially involving other second messengers. Plays an early role in the formation of the neuromuscular junction and is necessary for muscle maintenance. This is Syntrophin-1 from Caenorhabditis elegans.